We begin with the raw amino-acid sequence, 325 residues long: Bifunctional ligase/repressor BirA (325 aa).

The H-T-H motif DNA-binding region spans 23–42; sequence GQKISDALGCSRTAVWKHIE. A BPL/LPL catalytic domain is found at 74–262; the sequence is RFGLKTEVMG…CFEKRYRDYM (189 aa). Biotin is bound by residues glutamine 118, 122-124, and lysine 189; that span reads RGR.

The protein belongs to the biotin--protein ligase family.

The catalysed reaction is biotin + L-lysyl-[protein] + ATP = N(6)-biotinyl-L-lysyl-[protein] + AMP + diphosphate + H(+). Its function is as follows. Acts both as a biotin--[acetyl-CoA-carboxylase] ligase and a repressor. This chain is Bifunctional ligase/repressor BirA, found in Bacillus subtilis (strain 168).